The sequence spans 327 residues: Small ribosomal subunit protein RACK1z (327 aa).

WD repeat units follow at residues 13-44 (AHTD…ILWK), 61-91 (GHSH…RLWD), 103-133 (GHTK…KLWN), 148-180 (GHRD…KVWN), 192-222 (GHTG…LLWD), 233-262 (EANS…KIWD), and 293-323 (RKVI…RVWG).

This sequence belongs to the WD repeat G protein beta family. Ribosomal protein RACK1 subfamily. Homodimer and heterodimer with RACK1B or RACK1C. Interacts with NUDT7. Interacts with GB1, MEKK1, MKK4, MKK5, MPK3 and MPK6, but not with GPA1 or MPK4. Interacts with OFUT20. In terms of tissue distribution, widely expressed.

The protein resides in the cytoplasm. It localises to the nucleus. Functionally, major component of the RACK1 regulatory proteins that play a role in multiple signal transduction pathways. Involved in multiple hormone responses and developmental processes. MAPK cascade scaffolding protein involved in the protease IV and ArgC signaling pathway but not the flg22 pathway. The chain is Small ribosomal subunit protein RACK1z from Arabidopsis thaliana (Mouse-ear cress).